A 198-amino-acid polypeptide reads, in one-letter code: Probable septum site-determining protein MinC (198 aa).

The protein belongs to the MinC family. In terms of assembly, interacts with MinD and FtsZ.

Cell division inhibitor that blocks the formation of polar Z ring septums. Rapidly oscillates between the poles of the cell to destabilize FtsZ filaments that have formed before they mature into polar Z rings. Prevents FtsZ polymerization. The chain is Probable septum site-determining protein MinC from Thermosipho melanesiensis (strain DSM 12029 / CIP 104789 / BI429).